A 214-amino-acid chain; its full sequence is Coiled-coil domain-containing protein 169 (214 aa).

Residues 30–144 (EMLQMSTFEL…IEQEAKAYYK (115 aa)) are a coiled coil. The disordered stretch occupies residues 161 to 214 (VTQEAAKKQQSDPAHATREKPAFKAKYNGLAKRRTMTKRRGGMTKGSHPSNMKH). The segment covering 165–182 (AAKKQQSDPAHATREKPA) has biased composition (basic and acidic residues). Residues 191–202 (AKRRTMTKRRGG) are compositionally biased toward basic residues.

The protein belongs to the CCDC169 family.

In Xenopus laevis (African clawed frog), this protein is Coiled-coil domain-containing protein 169 (ccdc169).